The following is a 296-amino-acid chain: CCAAT/enhancer-binding protein beta (296 aa).

A required for Lys-133 sumoylation region spans residues 1–22 (MHRLLAWDAACLPPPPAAFRPM). Asymmetric dimethylarginine; by CARM1 is present on R3. A required for MYC transcriptional repression region spans residues 22-104 (MEVANFYYEP…YGAKPSKKPA (83 aa)). At K39 the chain carries N6-acetyllysine; alternate. K39 bears the N6-methylated lysine; alternate mark. N6-acetyllysine; by KAT2A and KAT2B occurs at positions 98 and 101. N6-acetyllysine; by KAT2A and KAT2B; alternate is present on K102. Glycyl lysine isopeptide (Lys-Gly) (interchain with G-Cter in SUMO2); alternate cross-links involve residues K102 and K133. K133 is covalently cross-linked (Glycyl lysine isopeptide (Lys-Gly) (interchain with G-Cter in SUMO); alternate). K144 participates in a covalent cross-link: Glycyl lysine isopeptide (Lys-Gly) (interchain with G-Cter in SUMO2). The interval 171-199 (SGSSGSLSTSSSSSPPGTPSPADAKAAPA) is disordered. Phosphothreonine; by GSK3-beta is present on T179. S180 and S181 each carry an O-linked (GlcNAc) serine glycan. S184 carries the phosphoserine; by GSK3-beta modification. T188 is subject to Phosphothreonine; by RPS6KA1, CDK2 and MAPK. Residues K211 and K213 each participate in a glycyl lysine isopeptide (Lys-Gly) (interchain with G-Cter in SUMO2) cross-link. At T217 the chain carries Phosphothreonine; by RPS6KA1 and PKC/PRKCA. One can recognise a bZIP domain in the interval 222–285 (SDEYKMRRER…STLRNLFKQL (64 aa)). The interval 226-246 (KMRRERNNIAVRKSRDKAKMR) is basic motif. S239 carries the post-translational modification Phosphoserine; by PKC/PRKCA. Residues 248–255 (LETQHKVL) form a leucine-zipper region. Residue S276 is modified to Phosphoserine; by CaMK2. K283 is covalently cross-linked (Glycyl lysine isopeptide (Lys-Gly) (interchain with G-Cter in SUMO2)).

Belongs to the bZIP family. C/EBP subfamily. Binds DNA as a homodimer and as a heterodimer. Interacts with ATF4. Binds DNA as a heterodimer with ATF4. Interacts with MYB; within the complex, MYB and CEBPB bind to different promoter regions. Can form stable heterodimers with CEBPA, CEBPD and CEBPE. Interacts with SIX1. Isoform 2 and isoform 3 also form heterodimers. Interacts with TRIM28 and PTGES2. Interacts with PRDM16. Interacts with CCDC85B. Forms a complex with THOC5. Interacts with ZNF638; this interaction increases transcriptional activation. Interacts with CIDEA and CIDEC. Interaction with CIDEA increases transcriptional activation of a subset of CEBPB downstream target genes, including ID2, IGF1, PRLR, SOCS1, SOCS3, XDH. Interaction with CIDEC increases transcriptional activation of SOCS1, SOCS3, TGFB1, TGFBR1, ID2 and XDH. Interacts with DDIT3/CHOP. Interacts with EP300; recruits EP300 to chromatin. Interacts with RORA; the interaction disrupts interaction with EP300. Interacts (not methylated) with MED23, MED26, SMARCA2, SMARCB1 and SMARCC1. Interacts with KAT2A and KAT2B. Interacts with ATF5; EP300 is required for ATF5 and CEBPB interaction and DNA binding. Interacts with NFE2L1; the heterodimer represses expression of DSPP during odontoblast differentiation. In terms of processing, sumoylated by polymeric chains of SUMO2 or SUMO3. Sumoylation at Lys-133 is required for inhibition of T-cells proliferation. In adipocytes, sumoylation at Lys-133 by PIAS1 leads to ubiquitination and subsequent proteasomal degradation. Desumoylated by SENP2, which abolishes ubiquitination and stabilizes protein levels. Post-translationally, ubiquitinated, leading to proteasomal degradation. Phosphorylated at Thr-188 by MAPK and CDK2, serves to prime phosphorylation at Thr-179 and Ser-184 by GSK3B and acquire DNA-binding as well as transactivation activities, required to induce adipogenesis. MAPK and CDK2 act sequentially to maintain Thr-188 in the primed phosphorylated state during mitotical cloning expansion and thereby progression of terminal differentiation. Phosphorylation at Thr-217 enhances transactivation activity. Phosphorylation at Ser-276 in response to calcium increases transactivation activity. Phosphorylated at Thr-188 by RPS6KA1. In terms of processing, O-glycosylated, glycosylation at Ser-180 and Ser-181 prevents phosphorylation on Thr-188, Ser-184 and Thr-179 and DNA binding activity which delays the adipocyte differentiation program. Post-translationally, acetylated. Acetylation at Lys-39 is an important and dynamic regulatory event that contributes to its ability to transactivate target genes, including those associated with adipogenesis and adipocyte function. Deacetylation by HDAC1 represses its transactivation activity. Acetylated by KAT2A and KAT2B within a cluster of lysine residues between amino acids 98-102, this acetylation is strongly induced by glucocorticoid treatment and enhances transactivation activity. Methylated. Methylation at Arg-3 by CARM1 and at Lys-39 by EHMT2, inhibits transactivation activity. Methylation is probably inhibited by phosphorylation at Thr-188. Abundantly expressed in myoblasts. Enriched in brown adipose tissue (BAT) versus white adipose tissue (WAT). Expressed in hepatocytes (at protein level). Expressed in T lymphocytes. The expression in granulosa cells of antral follicles is induced by luteinizing hormone. Expressed in chondrocytes and osteoblasts (at protein level).

It is found in the nucleus. The protein resides in the cytoplasm. Its function is as follows. Important transcription factor regulating the expression of genes involved in immune and inflammatory responses. Also plays a significant role in adipogenesis, as well as in the gluconeogenic pathway, liver regeneration, and hematopoiesis. The consensus recognition site is 5'-T[TG]NNGNAA[TG]-3'. Its functional capacity is governed by protein interactions and post-translational protein modifications. During early embryogenesis, plays essential and redundant roles with CEBPA. Has a promitotic effect on many cell types such as hepatocytes and adipocytes but has an antiproliferative effect on T-cells by repressing MYC expression, facilitating differentiation along the T-helper 2 lineage. Binds to regulatory regions of several acute-phase and cytokines genes and plays a role in the regulation of acute-phase reaction and inflammation. Also plays a role in intracellular bacteria killing. During adipogenesis, is rapidly expressed and, after activation by phosphorylation, induces CEBPA and PPARG, which turn on the series of adipocyte genes that give rise to the adipocyte phenotype. The delayed transactivation of the CEBPA and PPARG genes by CEBPB appears necessary to allow mitotic clonal expansion and thereby progression of terminal differentiation. Essential for female reproduction because of a critical role in ovarian follicle development. Restricts osteoclastogenesis. Together with NFE2L1; represses expression of DSPP during odontoblast differentiation. Functionally, essential for gene expression induction in activated macrophages. Plays a major role in immune responses such as CD4(+) T-cell response, granuloma formation and endotoxin shock. Not essential for intracellular bacteria killing. In terms of biological role, acts as a dominant negative through heterodimerization with isoform 2. Promotes osteoblast differentiation and osteoclastogenesis. This Mus musculus (Mouse) protein is CCAAT/enhancer-binding protein beta.